Here is a 285-residue protein sequence, read N- to C-terminus: (3S)-malyl-CoA thioesterase (285 aa).

The substrate site is built by Arg-70 and Glu-122. Residues Glu-122 and Asp-148 each contribute to the Mg(2+) site.

This sequence belongs to the HpcH/HpaI aldolase family. In terms of assembly, homodimer or homotrimer. Mg(2+) serves as cofactor.

The catalysed reaction is (S)-malyl-CoA + H2O = (S)-malate + CoA + H(+). In terms of biological role, catalyzes the hydrolysis of (3S)-malyl-CoA to (3S)-malate and free CoA. Inactive towards beta-methylmalyl-CoA and other CoA esters. In Cereibacter sphaeroides (strain ATCC 17025 / ATH 2.4.3) (Rhodobacter sphaeroides), this protein is (3S)-malyl-CoA thioesterase.